We begin with the raw amino-acid sequence, 194 residues long: Protein DROOPING LEAF (194 aa).

Residues 15-42 (CTYCNTVLAVGVPCKRLMDTVTVKCGHC) form a C4-type zinc finger. The interval 83–103 (LVSPTSNEGSPRAPFVVKPPE) is disordered.

The protein belongs to the YABBY family.

It is found in the nucleus. Functionally, regulates carpel specification in flower development. Severe or intermediate mutation in DL causes complete or partial homeotic conversion of carpels into stamens without affecting the identities of other floral organs. Interacts antagonistically with class B genes and controls floral meristem determinacy. Regulates midrib formation in leaves probably by inducing cell proliferation in the central region of the leaf. This chain is Protein DROOPING LEAF (DL), found in Oryza sativa subsp. japonica (Rice).